A 257-amino-acid chain; its full sequence is Beta-fibrinogenase (257 aa).

Positions 1–18 are cleaved as a signal peptide; sequence MVLIRVLANLLLLQLSHA. A propeptide spanning residues 19-24 is cleaved from the precursor; the sequence is QKSSEL. Residues 25 to 248 enclose the Peptidase S1 domain; it reads VVGGDECNIN…YTDWIQSIIA (224 aa). 6 cysteine pairs are disulfide-bonded: cysteine 31-cysteine 162, cysteine 49-cysteine 65, cysteine 97-cysteine 255, cysteine 141-cysteine 209, cysteine 173-cysteine 188, and cysteine 199-cysteine 224. N-linked (GlcNAc...) asparagine glycosylation is present at asparagine 44. Residue histidine 64 is the Charge relay system of the active site. N-linked (GlcNAc...) asparagine glycosylation is found at asparagine 78 and asparagine 102. Residue aspartate 109 is the Charge relay system of the active site. N-linked (GlcNAc...) asparagine glycans are attached at residues asparagine 153 and asparagine 169. The Charge relay system role is filled by serine 203. Asparagine 250 carries N-linked (GlcNAc...) asparagine glycosylation.

In terms of assembly, monomer. Glycosylated. Contains 23.0% of hexoses, 8.3% of hexosamines and 1.0% of sialic acids. Expressed by the venom gland.

It is found in the secreted. Inhibited by diisopropylfluorophosphate (DFP) and PMSF. Snake venom serine protease that has fibrinogenolytic activities by hydrolyzing the beta chain of fibrinogen (FGB). Typical arginine esterase which hydrolyzes esters and amides of arginine. The polypeptide is Beta-fibrinogenase (Macrovipera lebetinus (Levantine viper)).